The chain runs to 208 residues: Thymidylate kinase (208 aa).

9–16 contacts ATP; it reads GGEGCGKS.

This sequence belongs to the thymidylate kinase family.

It catalyses the reaction dTMP + ATP = dTDP + ADP. Its function is as follows. Phosphorylation of dTMP to form dTDP in both de novo and salvage pathways of dTTP synthesis. The polypeptide is Thymidylate kinase (Dehalococcoides mccartyi (strain ATCC BAA-2100 / JCM 16839 / KCTC 5957 / BAV1)).